We begin with the raw amino-acid sequence, 117 residues long: Ribulose bisphosphate carboxylase small subunit 1 (117 aa).

It belongs to the RuBisCO small chain family. In terms of assembly, heterohexadecamer of 8 large and 8 small subunits.

Functionally, ruBisCO catalyzes two reactions: the carboxylation of D-ribulose 1,5-bisphosphate, the primary event in carbon dioxide fixation, as well as the oxidative fragmentation of the pentose substrate. Both reactions occur simultaneously and in competition at the same active site. Although the small subunit is not catalytic it is essential for maximal activity. The polypeptide is Ribulose bisphosphate carboxylase small subunit 1 (Hydrogenovibrio marinus).